We begin with the raw amino-acid sequence, 178 residues long: MKSELTVPLIQLAPWRVPADCELPEALRPWLLEADSMTRRLRHHNRHFSVQLLGNRSVTLCADEQQLVAAEQPMGLCREVILHGDRGPAVLGWTLFAEAALQESGLRELGEQPLGERIFGDEPARRDHLQLACFEIASNPWCPAATVWGRRSRLFLGQWPLLVHELFLPSLSCNKELE.

The substrate site is built by M37, R78, L114, and E165.

This sequence belongs to the UbiC family.

It localises to the cytoplasm. The enzyme catalyses chorismate = 4-hydroxybenzoate + pyruvate. The protein operates within cofactor biosynthesis; ubiquinone biosynthesis. Functionally, removes the pyruvyl group from chorismate, with concomitant aromatization of the ring, to provide 4-hydroxybenzoate (4HB) for the ubiquinone pathway. The chain is Probable chorismate pyruvate-lyase from Aeromonas salmonicida (strain A449).